The sequence spans 491 residues: MLIFEKSRKNRRTLAHAIADKMDANDIPANLLRHDAPRLPELSELEVVRHFTRLSTQNFSIDTHFYPLGSCTMKYNPRAANRLASLPGYLKRHPLSPAPQSQAFLQCLYELQTMLTEITGMEKISLTSMAGAQGEFAGVAMIKAYHESRGDYDRTEMIVPDAAHGTNPASAAMCGFTVKEISTTKDGDIDLEKLRQMAGAKTAGIMLTNPSTLGVFERQISEVAKIIHNAGGLLYYDGANLNAILGKYRPGDMGFDVMHLNLHKTFATPHGGGGPGAGPVAAGPRLSKFLPVPMVGKNKEGYDWLTEKECPKSIGRLSAFMGNSGVLLRAYIYLRLLGKEGLSRVAEFSTLNANYLMKRLEQLGFTLAFPNRRASHEFIITLKPLTRAYGVTALDIAKRLLDYGFHAPTIYFPLLVPECLLIEPTETESKQTLDHFIEAMEKILTEIKTTPDLLRNAPHQQLINRLDEVKAARELDLRWYPIAKETEIFIQ.

Lysine 264 carries the post-translational modification N6-(pyridoxal phosphate)lysine.

This sequence belongs to the GcvP family. C-terminal subunit subfamily. The glycine cleavage system is composed of four proteins: P, T, L and H. In this organism, the P 'protein' is a heterodimer of two subunits. The cofactor is pyridoxal 5'-phosphate.

The catalysed reaction is N(6)-[(R)-lipoyl]-L-lysyl-[glycine-cleavage complex H protein] + glycine + H(+) = N(6)-[(R)-S(8)-aminomethyldihydrolipoyl]-L-lysyl-[glycine-cleavage complex H protein] + CO2. In terms of biological role, the glycine cleavage system catalyzes the degradation of glycine. The P protein binds the alpha-amino group of glycine through its pyridoxal phosphate cofactor; CO(2) is released and the remaining methylamine moiety is then transferred to the lipoamide cofactor of the H protein. The chain is Probable glycine dehydrogenase (decarboxylating) subunit 2 from Coxiella burnetii (strain Dugway 5J108-111).